The primary structure comprises 117 residues: Large ribosomal subunit protein uL18 (117 aa).

The protein belongs to the universal ribosomal protein uL18 family. In terms of assembly, part of the 50S ribosomal subunit; part of the 5S rRNA/L5/L18/L25 subcomplex. Contacts the 5S and 23S rRNAs.

In terms of biological role, this is one of the proteins that bind and probably mediate the attachment of the 5S RNA into the large ribosomal subunit, where it forms part of the central protuberance. In Yersinia enterocolitica serotype O:8 / biotype 1B (strain NCTC 13174 / 8081), this protein is Large ribosomal subunit protein uL18.